A 149-amino-acid polypeptide reads, in one-letter code: Protein SprT-like (149 aa).

Residues 6–147 (LQKLTEDISL…CGKCRGKIKR (142 aa)) enclose the SprT-like domain. H67 provides a ligand contact to Zn(2+). The active site involves E68. H71 provides a ligand contact to Zn(2+).

It belongs to the SprT family. The cofactor is Zn(2+).

It localises to the cytoplasm. This is Protein SprT-like from Bacillus velezensis (strain DSM 23117 / BGSC 10A6 / LMG 26770 / FZB42) (Bacillus amyloliquefaciens subsp. plantarum).